Here is a 168-residue protein sequence, read N- to C-terminus: Disulfide bond formation protein B (168 aa).

At 1–13 (MFLTYFDAMPRRV) the chain is on the cytoplasmic side. Residues 14 to 30 (LALVSLACVALLAFGLY) form a helical membrane-spanning segment. Topologically, residues 31–48 (LQHVVGLEPCPMCIVQRY) are periplasmic. Cys40 and Cys43 are joined by a disulfide. The helical transmembrane segment at 49–64 (ALVLVAVVAGITAVAK) threads the bilayer. At 65 to 70 (SRGLLI) the chain is on the cytoplasmic side. Residues 71 to 88 (TGSGLLVLLSGFGAFVAA) traverse the membrane as a helical segment. Residues 89 to 144 (RQSFLQWYPPEVASCGRDFYGMIETFPLKRAIPMIFKGSGDCTKIDWTFLGLSIAN) are Periplasmic-facing. Residues Cys103 and Cys130 are joined by a disulfide bond. Residues 145–163 (WSFLCFVAIALVGLVLITR) form a helical membrane-spanning segment. Residues 164–168 (LARQR) are Cytoplasmic-facing.

Belongs to the DsbB family.

The protein localises to the cell inner membrane. In terms of biological role, required for disulfide bond formation in some periplasmic proteins. Acts by oxidizing the DsbA protein. This chain is Disulfide bond formation protein B, found in Polaromonas sp. (strain JS666 / ATCC BAA-500).